The primary structure comprises 339 residues: 4-hydroxy-2-oxovalerate aldolase (339 aa).

A Pyruvate carboxyltransferase domain is found at 7-259 (VILHDMSLRD…QSGIDLYKIM (253 aa)). 15–16 (RD) lines the substrate pocket. Mn(2+) is bound at residue aspartate 16. The Proton acceptor role is filled by histidine 19. Substrate-binding residues include serine 169 and histidine 198. Mn(2+) is bound by residues histidine 198 and histidine 200. Position 289 (tyrosine 289) interacts with substrate.

It belongs to the 4-hydroxy-2-oxovalerate aldolase family.

The enzyme catalyses (S)-4-hydroxy-2-oxopentanoate = acetaldehyde + pyruvate. In Marinomonas sp. (strain MWYL1), this protein is 4-hydroxy-2-oxovalerate aldolase.